We begin with the raw amino-acid sequence, 382 residues long: MSLKEKTQSLFAEIFGYPATHTIQAPGRVNLIGEHTDYNDGFVLPCAIDYQTVISCATRDDRKVRVIAADYDNQVDEFSLDAPIVTHDSQQWSNYVRGVVKHLQKRNNAFGGADLVISGNVPQGAGLSSSASLEVAVGTVFQQLYHLPLDGAQIALNGQEAENQFVGCNCGIMDQLISALGKKDHALLIDCRTLGTKAVSMPEGVAVVIINSNFKRTLVGSEYNTRREQCETGARFFQQPALRDVSLAAFNAVASELDPIVAKRVRHVLTENARTVEAASALEKGDLKRMGELMAESHASMRDDFEITVPQIDTLVEIVKATIGDKGGVRMTGGGFGGCVVALLPEALVPAVQQAVATQYEAKTGIKETFYVCKPSQGAGQC.

Substrate is bound at residue 34-37 (EHTD). 124 to 130 (GAGLSSS) contributes to the ATP binding site. The Mg(2+) site is built by S130 and E162. Residue D174 is the Proton acceptor of the active site. Residue Y223 participates in substrate binding.

It belongs to the GHMP kinase family. GalK subfamily.

It is found in the cytoplasm. The enzyme catalyses alpha-D-galactose + ATP = alpha-D-galactose 1-phosphate + ADP + H(+). It functions in the pathway carbohydrate metabolism; galactose metabolism. In terms of biological role, catalyzes the transfer of the gamma-phosphate of ATP to D-galactose to form alpha-D-galactose-1-phosphate (Gal-1-P). The polypeptide is Galactokinase (Citrobacter koseri (strain ATCC BAA-895 / CDC 4225-83 / SGSC4696)).